The primary structure comprises 411 residues: UPF0754 membrane protein Npun_R4433 (411 aa).

Transmembrane regions (helical) follow at residues Trp3–Thr23 and Ile387–Val407.

This sequence belongs to the UPF0754 family.

The protein localises to the cell inner membrane. This chain is UPF0754 membrane protein Npun_R4433, found in Nostoc punctiforme (strain ATCC 29133 / PCC 73102).